A 202-amino-acid chain; its full sequence is Ribosomal RNA small subunit methyltransferase G (202 aa).

S-adenosyl-L-methionine contacts are provided by residues Gly75, Phe80, 125 to 126 (VQ), and Arg139.

Belongs to the methyltransferase superfamily. RNA methyltransferase RsmG family.

It localises to the cytoplasm. Functionally, specifically methylates the N7 position of a guanine in 16S rRNA. In Mesomycoplasma hyopneumoniae (strain 232) (Mycoplasma hyopneumoniae), this protein is Ribosomal RNA small subunit methyltransferase G.